We begin with the raw amino-acid sequence, 367 residues long: Heme A synthase (367 aa).

5 helical membrane passes run 25–45 (ALRF…LVGG), 111–131 (LIAR…WLTG), 139–159 (WPLV…WWMV), 174–194 (LATH…IMRG), and 210–230 (GFAA…ALVA). His274 serves as a coordination point for heme. Transmembrane regions (helical) follow at residues 276–296 (IGAY…LRAA), 305–325 (AVVL…TLLM), and 327–347 (VPLH…GFAI). His335 serves as a coordination point for heme.

Belongs to the COX15/CtaA family. Type 2 subfamily. In terms of assembly, interacts with CtaB. Heme b serves as cofactor.

The protein localises to the cell membrane. It catalyses the reaction Fe(II)-heme o + 2 A + H2O = Fe(II)-heme a + 2 AH2. It functions in the pathway porphyrin-containing compound metabolism; heme A biosynthesis; heme A from heme O: step 1/1. Its function is as follows. Catalyzes the conversion of heme O to heme A by two successive hydroxylations of the methyl group at C8. The first hydroxylation forms heme I, the second hydroxylation results in an unstable dihydroxymethyl group, which spontaneously dehydrates, resulting in the formyl group of heme A. This chain is Heme A synthase, found in Rhizobium leguminosarum bv. trifolii (strain WSM2304).